The sequence spans 1453 residues: Chromatin remodeling regulator CECR2 (1453 aa).

A disordered region spans residues 170–237 (VQGRSNGELS…DLQTRNGSRG (68 aa)). The segment covering 197 to 209 (TGKRRGRPPKRKK) has biased composition (basic residues). The span at 210-222 (LQEEIISSEKQEE) shows a compositional bias: basic and acidic residues. Polar residues predominate over residues 223 to 234 (NSLTSDLQTRNG). Position 402 is a phosphoserine (serine 402). The Bromo domain maps to 414 to 518 (FELDDDFTAM…RCFHRAMTKH (105 aa)). Threonine 526 is subject to Phosphothreonine. 8 disordered regions span residues 536-667 (EKRE…HPPF), 767-796 (HGTT…TLGH), 827-868 (GYMQ…GESM), 884-1020 (VCPP…DNSY), 1046-1072 (VVGE…LCPR), 1131-1308 (LASM…YLYG), 1331-1368 (MLQT…VATQ), and 1396-1453 (QTGT…LDQS). Residue serine 551 is modified to Phosphoserine. A compositionally biased stretch (polar residues) spans 637–649 (GSLQGSDPTNLHG). Residues 655-664 (EAPPGEPLQH) are compositionally biased toward pro residues. Residues 887–905 (PGVPYHPRQPTPPQLPGPF) show a composition bias toward pro residues. Position 983 is a phosphoserine (serine 983). Over residues 985 to 998 (QERETEDSQLKSDA) the composition is skewed to basic and acidic residues. Over residues 999–1020 (SDSADTYKTSKNKNTWPLDNSY) the composition is skewed to polar residues. Asymmetric dimethylarginine is present on residues arginine 1166 and arginine 1172. Composition is skewed to low complexity over residues 1173 to 1187 (YSYQ…HPYQ) and 1202 to 1211 (QRSLPSQRSP). A compositionally biased stretch (polar residues) spans 1228–1250 (NVLSSLQGCETLNTALTSPTQMD). Residues 1265-1289 (GPEEEKMDESVERPESPKEFLDLDN) are compositionally biased toward basic and acidic residues. A Phosphoserine modification is found at serine 1280. Composition is skewed to polar residues over residues 1291 to 1304 (NAAT…STSD) and 1331 to 1346 (MLQT…SASH). Positions 1352 to 1364 (YPSPVPAHPPPHP) are enriched in pro residues.

Component of the CERF-1 ISWI chromatin remodeling complex (also called the CECR2-containing remodeling factor (CERF) complex) at least composed of CECR2 and SMARCA1. Component of the CERF-5 ISWI chromatin remodeling complex at least composed of CECR2 and SMARCA5/SNF2H. LUZP1 is detected as part of the CERF-1 and CERF-5 complexes in embryonic stem (ES) cells where it is involved in complex stabilization but is not detected in the complexes in the testis. Interacts with CCAR2; CCAR2 may form part of the CERF-1 and/or CEF-5 ISWI chromatin remodeling complexes in ES cells. Interacts with acetylated lysine residues on histone H2A and H3 (in vitro). Interacts with LRPPRC.

The protein resides in the nucleus. Regulatory subunit of the ATP-dependent CERF-1 and CERF-5 ISWI chromatin remodeling complexes, which form ordered nucleosome arrays on chromatin and facilitate access to DNA during DNA-templated processes such as DNA replication, transcription, and repair. The complexes do not have the ability to slide mononucleosomes to the center of a DNA template. The CERF-1 ISWI chromatin remodeling complex has a lower ATP hydrolysis rate than the CERF-5 ISWI chromatin remodeling complex. Plays a role in various processes during development: required during embryogenesis for neural tube closure and inner ear development. In adults, required for spermatogenesis, via the formation of ISWI-type chromatin complexes. In histone-modifying complexes, CECR2 recognizes and binds acylated histones: binds histones that are acetylated and/or butyrylated. May also be involved through its interaction with LRPPRC in the integration of cytoskeletal network with vesicular trafficking, nucleocytosolic shuttling, transcription, chromosome remodeling and cytokinesis. This Mus musculus (Mouse) protein is Chromatin remodeling regulator CECR2.